The following is a 388-amino-acid chain: 2-Hydroxyacid oxidase (388 aa).

The disordered stretch occupies residues 1–21 (MENQFKNNNNSSSIETSNQFS). The FMN hydroxy acid dehydrogenase domain occupies 26–384 (NRLDSFVSVS…NNSIIWDQNK (359 aa)). Residue Tyr52 participates in glyoxylate binding. Residues 105–107 (PWA), Ser134, 156–158 (QLY), and Thr184 each bind FMN. Glyoxylate is bound at residue Tyr158. Arg193 lines the glyoxylate pocket. The FMN site is built by Lys255 and Ser277. Residues His279 and Arg282 each coordinate glyoxylate. Catalysis depends on His279, which acts as the Proton acceptor. FMN contacts are provided by residues 310–314 (DGGIR) and 333–334 (GR).

The protein belongs to the FMN-dependent alpha-hydroxy acid dehydrogenase family. As to quaternary structure, homotetramer. Requires FMN as cofactor.

The catalysed reaction is glycolate + O2 = glyoxylate + H2O2. The enzyme catalyses a (2S)-2-hydroxycarboxylate + O2 = a 2-oxocarboxylate + H2O2. Functionally, catalyzes the oxidation of glycolate to glyoxylate, with a reduction of O2 to H2O2. May use other 2-hydroxyacids as substrates. This Dictyostelium discoideum (Social amoeba) protein is 2-Hydroxyacid oxidase (haox).